The primary structure comprises 919 residues: Chaperone protein ClpC2, chloroplastic (919 aa).

The N-terminal 54 residues, 1-54 (MAGTLLQPVALGTTFAGRVSGQRWKSHGTRRPPSMLAMSLSRPVKMAAFVGLRS), are a transit peptide targeting the chloroplast. The Clp R domain maps to 89-231 (FERFTEKAIK…RTQVIRMIGE (143 aa)). Repeat regions lie at residues 92–157 (FTEK…IGRG) and 167–231 (FTPR…MIGE). Positions 252 to 499 (LEEYGTNLTK…RVRLRHAQVP (248 aa)) are i. 297–304 (GEPGVGKT) contacts ATP. Residues 506-541 (DKELKQITKDKNEAVRSQDFEKAGELRDREMELKAQ) form the UVR domain. The tract at residues 566–757 (VNEADIQHIV…LLIMTSNVGS (192 aa)) is II. 640–647 (GPTGVGKS) lines the ATP pocket.

Belongs to the ClpA/ClpB family. ClpC subfamily.

It is found in the plastid. The protein localises to the chloroplast. In terms of biological role, molecular chaperone that may interact with a ClpP-like protease involved in degradation of denatured proteins in the chloroplast. The sequence is that of Chaperone protein ClpC2, chloroplastic (CLPC2) from Oryza sativa subsp. japonica (Rice).